Consider the following 185-residue polypeptide: MINEIKEDAKSRMAKCVEATKNQMAKVRTGRAHPSLLDSIKVPYYGTPTPLKQVGNVSIEDSRTLAITVFDTTMIAAVEKAIMSSDLGLNPMSAGTTIRIPLPALTEERRKDLIKVVRAEAENGRIAVRNVRRDANSDVKALEKEKECTEDDVRRTEDEIQKFTDAHIKQIDEILTAKEAELMEV.

It belongs to the RRF family.

The protein resides in the cytoplasm. Responsible for the release of ribosomes from messenger RNA at the termination of protein biosynthesis. May increase the efficiency of translation by recycling ribosomes from one round of translation to another. This is Ribosome-recycling factor from Shewanella loihica (strain ATCC BAA-1088 / PV-4).